A 424-amino-acid polypeptide reads, in one-letter code: Histidine--tRNA ligase (424 aa).

It belongs to the class-II aminoacyl-tRNA synthetase family. As to quaternary structure, homodimer.

It is found in the cytoplasm. It catalyses the reaction tRNA(His) + L-histidine + ATP = L-histidyl-tRNA(His) + AMP + diphosphate + H(+). The sequence is that of Histidine--tRNA ligase from Salmonella dublin (strain CT_02021853).